A 418-amino-acid polypeptide reads, in one-letter code: Probable cysteine desulfurase 2 (418 aa).

Lys234 bears the N6-(pyridoxal phosphate)lysine mark. Residue Cys374 is the Cysteine persulfide intermediate of the active site.

Belongs to the class-V pyridoxal-phosphate-dependent aminotransferase family. Csd subfamily. Pyridoxal 5'-phosphate serves as cofactor.

It catalyses the reaction (sulfur carrier)-H + L-cysteine = (sulfur carrier)-SH + L-alanine. Functionally, catalyzes the removal of elemental sulfur and selenium atoms from L-cysteine, L-cystine, L-selenocysteine, and L-selenocystine to produce L-alanine. The chain is Probable cysteine desulfurase 2 (csd2) from Mycobacterium leprae (strain TN).